Consider the following 77-residue polypeptide: Chassatide C2 (77 aa).

The signal sequence occupies residues 1 to 24 (MAKFANYLMLFLLVASLVMLEAQS). Positions 25 to 44 (SDTIKVPDLGKRLLMNRDPN) are cleaved as a propeptide — removed in mature form. Residues 45–75 (GIPCAESCVWIPCTITALMGCSCKNNVCYNN) constitute a cross-link (cyclopeptide (Gly-Asn)). Intrachain disulfides connect C48–C65, C52–C67, and C57–C72. A Methionine sulfoxide; in form chassatide chaC2A modification is found at M63. A propeptide spans 76–77 (EL) (removed in mature form).

This sequence belongs to the cyclotide family. Bracelet subfamily. Post-translationally, this is a cyclic peptide. As to expression, expressed in fruit, pedicel and stem but not in leaf and root (at protein level).

Its function is as follows. Chassatide C2: Probably participates in a plant defense mechanism. Has no activity against bacteria up to a concentration of 80 uM. Has cytotoxic but no hemolytic activity. In terms of biological role, chassatide C2A: Probably participates in a plant defense mechanism. Has no activity against bacteria up to a concentration of 80 uM. Has no cytotoxic and no hemolytic activity. This is Chassatide C2 from Chassalia chartacea (Chassalia curviflora).